Reading from the N-terminus, the 561-residue chain is Arginine--tRNA ligase (561 aa).

The 'HIGH' region signature appears at 129 to 139 (ANPTGPLHVGH).

It belongs to the class-I aminoacyl-tRNA synthetase family. As to quaternary structure, monomer.

It is found in the cytoplasm. It carries out the reaction tRNA(Arg) + L-arginine + ATP = L-arginyl-tRNA(Arg) + AMP + diphosphate. This Bordetella parapertussis (strain 12822 / ATCC BAA-587 / NCTC 13253) protein is Arginine--tRNA ligase.